The primary structure comprises 292 residues: Probable endonuclease 4 (292 aa).

Positions 69, 109, 145, 179, 182, 216, 229, 231, and 261 each coordinate Zn(2+).

The protein belongs to the AP endonuclease 2 family. Zn(2+) serves as cofactor.

It catalyses the reaction Endonucleolytic cleavage to 5'-phosphooligonucleotide end-products.. Its function is as follows. Endonuclease IV plays a role in DNA repair. It cleaves phosphodiester bonds at apurinic or apyrimidinic (AP) sites, generating a 3'-hydroxyl group and a 5'-terminal sugar phosphate. The polypeptide is Probable endonuclease 4 (Desulfotalea psychrophila (strain LSv54 / DSM 12343)).